Consider the following 295-residue polypeptide: Nucleotide-binding protein MCA0739 (295 aa).

8-15 (GFSGSGKS) is an ATP binding site. Residue 60–63 (DARN) coordinates GTP.

This sequence belongs to the RapZ-like family.

Displays ATPase and GTPase activities. The polypeptide is Nucleotide-binding protein MCA0739 (Methylococcus capsulatus (strain ATCC 33009 / NCIMB 11132 / Bath)).